The primary structure comprises 603 residues: Multicopper oxidase MCE (603 aa).

Residues 1–21 (MNTFICSALICLSWLPGFIQA) form the signal peptide. In terms of domain architecture, Plastocyanin-like 1 spans 30–144 (ITYAKGAPDG…YGALWIRPKE (115 aa)). N-linked (GlcNAc...) asparagine glycosylation occurs at Asn-75. His-79, His-81, His-123, and His-125 together coordinate Cu cation. Asn-155, Asn-180, Asn-235, Asn-256, Asn-272, Asn-275, Asn-388, Asn-394, Asn-413, and Asn-455 each carry an N-linked (GlcNAc...) asparagine glycan. Positions 173–353 (LIVSDWSNFT…TPGDYTIRLP (181 aa)) constitute a Plastocyanin-like 2 domain. Residues 450–581 (LLYNPNSTAA…GGMAGVIMDG (132 aa)) enclose the Plastocyanin-like 3 domain. Residue His-495 participates in Cu cation binding. N-linked (GlcNAc...) asparagine glycans are attached at residues Asn-512 and Asn-595.

This sequence belongs to the multicopper oxidase family.

It carries out the reaction 4 monapinone A + O2 = 2 dinapinone A + 2 H2O. The catalysed reaction is 4 monapinone E + O2 = 2 dinapinone E + 2 H2O. The protein operates within secondary metabolite biosynthesis. Its function is as follows. Multicopper oxidase; part of the gene cluster that mediates the biosynthesis of dinapinones DPA1 (or (M)-DPA) and DPA2 (or (P)-DPA), biaryl dihydronaphthopyranones that act in concert as inhibitors of triacylglycerol accumulation in mammalian cells. The first step in the pathway corresponds to the biosynthesis of dihydroxy-decanoyl-CoA by the fungal type I fatty acid synthase (formed by ORF4 and ORF5). The cluster-specific polyketide synthase (ORF7) then accepts and extends dihydroxy-decanoyl-CoA with 6 malonyl-CoA moieties and cyclizes the molecule to produce a putative polyhydroxynaphthopyranone intermediate, which is further methylated by the cluster-specific methyltransferase (ORF1) at 7-OH to produce monapinone A (MPA). MCE catalyzes the regioselective biaryl coupling of monapinone A (MPA) at the 8,8'-positions to afford dimeric atropisomers DPA1 and DPA2 in a ratio of approximately 1:2.5. Monapinone E (MPE) also appears to be a substrate for MCE and provides the atropisomers dinapinones DPE1 (or (M)-DPE) and DPE2 (or (P)-DPE). This is Multicopper oxidase MCE from Talaromyces pinophilus (Penicillium pinophilum).